The sequence spans 254 residues: Thiazole synthase (254 aa).

Lysine 95 (schiff-base intermediate with DXP) is an active-site residue. Residues glycine 156, 182–183 (AG), and 204–205 (NT) each bind 1-deoxy-D-xylulose 5-phosphate.

This sequence belongs to the ThiG family. As to quaternary structure, homotetramer. Forms heterodimers with either ThiH or ThiS.

It is found in the cytoplasm. The enzyme catalyses [ThiS sulfur-carrier protein]-C-terminal-Gly-aminoethanethioate + 2-iminoacetate + 1-deoxy-D-xylulose 5-phosphate = [ThiS sulfur-carrier protein]-C-terminal Gly-Gly + 2-[(2R,5Z)-2-carboxy-4-methylthiazol-5(2H)-ylidene]ethyl phosphate + 2 H2O + H(+). Its pathway is cofactor biosynthesis; thiamine diphosphate biosynthesis. Its function is as follows. Catalyzes the rearrangement of 1-deoxy-D-xylulose 5-phosphate (DXP) to produce the thiazole phosphate moiety of thiamine. Sulfur is provided by the thiocarboxylate moiety of the carrier protein ThiS. In vitro, sulfur can be provided by H(2)S. The protein is Thiazole synthase of Vibrio atlanticus (strain LGP32) (Vibrio splendidus (strain Mel32)).